The primary structure comprises 98 residues: NADH-ubiquinone oxidoreductase chain 4L (98 aa).

A run of 3 helical transmembrane segments spans residues 1–21, 29–49, and 59–79; these read MTTM…GVFI, TLLC…LILL, and LPLI…ALLV.

It belongs to the complex I subunit 4L family. Core subunit of respiratory chain NADH dehydrogenase (Complex I) which is composed of 45 different subunits.

It localises to the mitochondrion inner membrane. The enzyme catalyses a ubiquinone + NADH + 5 H(+)(in) = a ubiquinol + NAD(+) + 4 H(+)(out). Functionally, core subunit of the mitochondrial membrane respiratory chain NADH dehydrogenase (Complex I) which catalyzes electron transfer from NADH through the respiratory chain, using ubiquinone as an electron acceptor. Part of the enzyme membrane arm which is embedded in the lipid bilayer and involved in proton translocation. This Ornithorhynchus anatinus (Duckbill platypus) protein is NADH-ubiquinone oxidoreductase chain 4L (MT-ND4L).